The chain runs to 131 residues: UPF0102 protein AZC_4471 (131 aa).

Belongs to the UPF0102 family.

This is UPF0102 protein AZC_4471 from Azorhizobium caulinodans (strain ATCC 43989 / DSM 5975 / JCM 20966 / LMG 6465 / NBRC 14845 / NCIMB 13405 / ORS 571).